The sequence spans 2564 residues: Histone-lysine N-methyltransferase SETD2 (2564 aa).

Pro residues predominate over residues 1–11 (MKQLQPQPPPK). Residues 1–30 (MKQLQPQPPPKMGDFYDPEHPTPEEEENEA) are disordered. Over residues 17-30 (DPEHPTPEEEENEA) the composition is skewed to basic and acidic residues. The residue at position 131 (Ser-131) is a Phosphoserine. Disordered stretches follow at residues 180 to 211 (STTVDSPPSSPPPPPPPAQATTLSSPAPVTEP), 272 to 561 (NEQA…TLSK), and 607 to 626 (PEREKAGSPAPSNRLNDSPT). The segment covering 187–197 (PSSPPPPPPPA) has biased composition (pro residues). A compositionally biased stretch (low complexity) spans 198–207 (QATTLSSPAP). The segment covering 278–290 (SSKKEDSHIGKDE) has biased composition (basic and acidic residues). Phosphoserine occurs at positions 321, 323, and 344. 4 stretches are compositionally biased toward basic and acidic residues: residues 335-400 (RSHD…ERER), 421-432 (RSERSHYYDSDR), 439-467 (PYRERTRYSRPYTDNRARESSDSEEEYKK), and 479-528 (SYRD…EAIK). A Glycyl lysine isopeptide (Lys-Gly) (interchain with G-Cter in SUMO2) cross-link involves residue Lys-359. Ser-422 is modified (phosphoserine). Phosphoserine occurs at positions 532, 614, and 624. Residues 616 to 625 (APSNRLNDSP) show a composition bias toward polar residues. Thr-626 bears the Phosphothreonine mark. A Glycyl lysine isopeptide (Lys-Gly) (interchain with G-Cter in SUMO2) cross-link involves residue Lys-637. Phosphoserine occurs at positions 698, 708, 744, and 754. A Glycyl lysine isopeptide (Lys-Gly) (interchain with G-Cter in SUMO2) cross-link involves residue Lys-776. 5 disordered regions span residues 964-995 (EEGNSILPERRGRPEISLDERGEGGHVHTSDD), 1036-1101 (EDYS…SDHW), 1133-1233 (LHKG…LGKT), 1264-1352 (QEKP…FSDQ), and 1393-1443 (LEKN…PGSA). Positions 971–994 (PERRGRPEISLDERGEGGHVHTSD) are enriched in basic and acidic residues. Residues 1045 to 1058 (SNDESDSEDTDSDD) are compositionally biased toward acidic residues. Over residues 1084–1095 (SPCSSRSSQSYR) the composition is skewed to low complexity. At Ser-1098 the chain carries Phosphoserine. Polar residues predominate over residues 1162-1171 (HPQSDGVDST). Positions 1172–1191 (SHTDVKSDPLGHPNSEETVK) are enriched in basic and acidic residues. Positions 1215-1225 (KSWQQTTFQNR) are enriched in polar residues. Ser-1228 is subject to Phosphoserine. Polar residues predominate over residues 1265-1276 (EKPSTTYQQPDS). Positions 1393–1403 (LEKNDIKDRGP) are enriched in basic and acidic residues. Residues Ser-1413, Ser-1415, and Ser-1417 each carry the phosphoserine modification. Residues 1418–1714 (DGELQDRKKV…KKERSRKKDS (297 aa)) are interaction with TUBA1A. The span at 1421 to 1431 (LQDRKKVRVEV) shows a compositional bias: basic and acidic residues. In terms of domain architecture, AWS spans 1494-1548 (IKRMQCECTPLSKDERAQGEIACGEDCLNRLLMIECSSRCPNGDYCSNRRFQRKQ). Zn(2+) contacts are provided by Cys-1499, Cys-1501, Cys-1516, Cys-1520, Cys-1529, Cys-1533, and Cys-1539. Residues 1550-1667 (ADVEVILTEK…SGSELTFDYQ (118 aa)) form the SET domain. Residues 1560–1562 (KGW), 1603–1605 (HYY), and 1628–1629 (NH) contribute to the S-adenosyl-L-methionine site. Cys-1631 lines the Zn(2+) pocket. The region spanning 1674-1690 (EAQKCFCGSANCRGYLG) is the Post-SET domain. Gln-1676 is an S-adenosyl-L-methionine binding site. Residue Cys-1678 coordinates Zn(2+). S-adenosyl-L-methionine is bound at residue Phe-1679. 2 residues coordinate Zn(2+): Cys-1680 and Cys-1685. Phosphoserine occurs at positions 1696, 1844, and 1845. Residues 1831–1872 (KTAVPPLSEGDGYSSENTSRAHTPLNTPDPSTKLSTEADTDT) form a disordered region. The segment covering 1844–1867 (SSENTSRAHTPLNTPDPSTKLSTE) has biased composition (polar residues). 2 positions are modified to phosphothreonine: Thr-1853 and Thr-1872. Ser-1888 bears the Phosphoserine mark. The segment at 1921 to 2142 (EELQSQQLLP…EAQKQQQQMQ (222 aa)) is disordered. The span at 1924–1935 (QSQQLLPQQLPE) shows a compositional bias: low complexity. The residue at position 1952 (Ser-1952) is a Phosphoserine. The span at 1960 to 1972 (IEPKESNGTKLEE) shows a compositional bias: basic and acidic residues. Positions 1973 to 1990 (PINEETPSQDEEEGVSDV) are enriched in acidic residues. Residues Ser-1980, Ser-1988, and Ser-1995 each carry the phosphoserine modification. 3 stretches are compositionally biased toward basic and acidic residues: residues 1991–2004 (ESERSQEQPDKTVD), 2014–2046 (DSWKDLKEVYRIPKKSQTEKENTTTERGRDAVG), and 2059–2072 (RSRERDPDKQTQNK). 2 positions are modified to phosphoserine: Ser-2080 and Ser-2082. Basic and acidic residues-rich tracts occupy residues 2090–2100 (RGTKRPDDRYD) and 2111–2135 (KDRNKLSTEERRKLFEQEVAQREAQ). Positions 2117-2146 (STEERRKLFEQEVAQREAQKQQQQMQNLGM) form a coiled coil. Residues 2137–2366 (QQQQMQNLGM…APGQPQPLQP (230 aa)) are low charge region. Residues 2389–2422 (IVLPPNWKTARDPEGKIYYYHVITRQTQWDPPTW) enclose the WW domain. Positions 2439–2465 (LGTPTYDENPMKASKKPKTAEADTSSE) are disordered. An interaction with POLR2A region spans residues 2457–2564 (TAEADTSSEL…YKPKEDTELE (108 aa)).

It belongs to the class V-like SAM-binding methyltransferase superfamily. Histone-lysine methyltransferase family. SET2 subfamily. As to quaternary structure, specifically interacts with hyperphosphorylated C-terminal domain (CTD) of RNA polymerase II large subunit (POLR2A): binds to CTD heptad repeats doubly phosphorylated on 'Ser-2' and 'Ser-5' of each heptad. Interacts with HTT. Interacts with IWS1. Interacts with p53/TP53; leading to regulate p53/TP53 target genes. Component of a complex with HNRNPL. Interacts with TUBA1A; the interaction is independent on alpha-tubulin acetylation on 'Lys-40'. Interacts with STAT1. May be automethylated. As to expression, ubiquitously expressed.

The protein resides in the nucleus. It localises to the chromosome. The enzyme catalyses L-lysyl(36)-[histone H3] + 3 S-adenosyl-L-methionine = N(6),N(6),N(6)-trimethyl-L-lysyl(36)-[histone H3] + 3 S-adenosyl-L-homocysteine + 3 H(+). The catalysed reaction is L-lysyl-[protein] + S-adenosyl-L-methionine = N(6)-methyl-L-lysyl-[protein] + S-adenosyl-L-homocysteine + H(+). It catalyses the reaction L-lysyl-[protein] + 3 S-adenosyl-L-methionine = N(6),N(6),N(6)-trimethyl-L-lysyl-[protein] + 3 S-adenosyl-L-homocysteine + 3 H(+). With respect to regulation, specifically inhibited by sinefungin derivatives. N-propyl sinefungin (Pr-SNF) interacts preferentially with SETD2. Histone methyltransferase that specifically trimethylates 'Lys-36' of histone H3 (H3K36me3) using dimethylated 'Lys-36' (H3K36me2) as substrate. It is capable of trimethylating unmethylated H3K36 (H3K36me0) in vitro. Represents the main enzyme generating H3K36me3, a specific tag for epigenetic transcriptional activation. Plays a role in chromatin structure modulation during elongation by coordinating recruitment of the FACT complex and by interacting with hyperphosphorylated POLR2A. Acts as a key regulator of DNA mismatch repair in G1 and early S phase by generating H3K36me3, a mark required to recruit MSH6 subunit of the MutS alpha complex: early recruitment of the MutS alpha complex to chromatin to be replicated allows a quick identification of mismatch DNA to initiate the mismatch repair reaction. Required for DNA double-strand break repair in response to DNA damage: acts by mediating formation of H3K36me3, promoting recruitment of RAD51 and DNA repair via homologous recombination (HR). Acts as a tumor suppressor. H3K36me3 also plays an essential role in the maintenance of a heterochromatic state, by recruiting DNA methyltransferase DNMT3A. H3K36me3 is also enhanced in intron-containing genes, suggesting that SETD2 recruitment is enhanced by splicing and that splicing is coupled to recruitment of elongating RNA polymerase. Required during angiogenesis. Required for endoderm development by promoting embryonic stem cell differentiation toward endoderm: acts by mediating formation of H3K36me3 in distal promoter regions of FGFR3, leading to regulate transcription initiation of FGFR3. In addition to histones, also mediates methylation of other proteins, such as tubulins and STAT1. Trimethylates 'Lys-40' of alpha-tubulins such as TUBA1B (alpha-TubK40me3); alpha-TubK40me3 is required for normal mitosis and cytokinesis and may be a specific tag in cytoskeletal remodeling. Involved in interferon-alpha-induced antiviral defense by mediating both monomethylation of STAT1 at 'Lys-525' and catalyzing H3K36me3 on promoters of some interferon-stimulated genes (ISGs) to activate gene transcription. Its function is as follows. (Microbial infection) Recruited to the promoters of adenovirus 12 E1A gene in case of infection, possibly leading to regulate its expression. The polypeptide is Histone-lysine N-methyltransferase SETD2 (SETD2) (Homo sapiens (Human)).